The primary structure comprises 329 residues: ADP-L-glycero-D-manno-heptose-6-epimerase (329 aa).

NADP(+) contacts are provided by residues 10–11 (FI), 31–32 (DD), lysine 38, lysine 53, 74–78 (QGACS), and asparagine 91. Tyrosine 138 functions as the Proton acceptor in the catalytic mechanism. Lysine 142 lines the NADP(+) pocket. Asparagine 167 is a substrate binding site. NADP(+) contacts are provided by valine 168 and lysine 176. The active-site Proton acceptor is the lysine 176. Substrate contacts are provided by residues arginine 178, histidine 185, 199–202 (FAGW), arginine 212, and tyrosine 291.

It belongs to the NAD(P)-dependent epimerase/dehydratase family. HldD subfamily. Homopentamer. Requires NADP(+) as cofactor.

The enzyme catalyses ADP-D-glycero-beta-D-manno-heptose = ADP-L-glycero-beta-D-manno-heptose. The protein operates within nucleotide-sugar biosynthesis; ADP-L-glycero-beta-D-manno-heptose biosynthesis; ADP-L-glycero-beta-D-manno-heptose from D-glycero-beta-D-manno-heptose 7-phosphate: step 4/4. It functions in the pathway bacterial outer membrane biogenesis; LPS core biosynthesis. Its function is as follows. Catalyzes the interconversion between ADP-D-glycero-beta-D-manno-heptose and ADP-L-glycero-beta-D-manno-heptose via an epimerization at carbon 6 of the heptose. The chain is ADP-L-glycero-D-manno-heptose-6-epimerase from Bordetella pertussis (strain Tohama I / ATCC BAA-589 / NCTC 13251).